Reading from the N-terminus, the 61-residue chain is Metallothionein-2 (61 aa).

At Met-1 the chain carries N-acetylmethionine. Positions 1-29 are beta; that stretch reads MDPNCSCATDGSCSCAGSCKCKECKCTTC. Positions 5, 7, 13, 15, 19, 21, 24, 26, 29, 33, 34, 36, 37, 41, 44, 48, 50, and 57 each coordinate a divalent metal cation. The segment at 30 to 61 is alpha; it reads KKSCCSCCPVGCAKCSQGCVCKEASDKCSCCA. Ser-58 carries the phosphoserine modification. Positions 59 and 60 each coordinate a divalent metal cation.

The protein belongs to the metallothionein superfamily. Type 1 family.

Functionally, metallothioneins have a high content of cysteine residues that bind various heavy metals; these proteins are transcriptionally regulated by both heavy metals and glucocorticoids. This chain is Metallothionein-2 (MT2), found in Cricetulus griseus (Chinese hamster).